Here is a 198-residue protein sequence, read N- to C-terminus: Glycerol-3-phosphate acyltransferase 1 (198 aa).

A run of 5 helical transmembrane segments spans residues 5 to 25 (ALLALLLSYLIGAIPAAAWLA), 52 to 72 (GPALLVASFDILKGVLAVLLA), 81 to 101 (WAALCGVLAVIGHNFSPFLAF), 111 to 131 (FGVIAILDPVLGLTTFVLAIA), and 138 to 158 (FVSAGSIMGAFIAGALVLVLP).

It belongs to the PlsY family. In terms of assembly, probably interacts with PlsX.

It localises to the cell membrane. It carries out the reaction an acyl phosphate + sn-glycerol 3-phosphate = a 1-acyl-sn-glycero-3-phosphate + phosphate. The protein operates within lipid metabolism; phospholipid metabolism. Its function is as follows. Catalyzes the transfer of an acyl group from acyl-phosphate (acyl-PO(4)) to glycerol-3-phosphate (G3P) to form lysophosphatidic acid (LPA). This enzyme utilizes acyl-phosphate as fatty acyl donor, but not acyl-CoA or acyl-ACP. The polypeptide is Glycerol-3-phosphate acyltransferase 1 (Deinococcus radiodurans (strain ATCC 13939 / DSM 20539 / JCM 16871 / CCUG 27074 / LMG 4051 / NBRC 15346 / NCIMB 9279 / VKM B-1422 / R1)).